The sequence spans 61 residues: Small ribosomal subunit protein uS14 (61 aa).

4 residues coordinate Zn(2+): Cys-24, Cys-27, Cys-40, and Cys-43.

Belongs to the universal ribosomal protein uS14 family. Zinc-binding uS14 subfamily. In terms of assembly, part of the 30S ribosomal subunit. Contacts proteins S3 and S10. Requires Zn(2+) as cofactor.

Functionally, binds 16S rRNA, required for the assembly of 30S particles and may also be responsible for determining the conformation of the 16S rRNA at the A site. The sequence is that of Small ribosomal subunit protein uS14 from Staphylococcus aureus (strain USA300 / TCH1516).